A 468-amino-acid polypeptide reads, in one-letter code: Trehalose-binding lipoprotein LpqY (468 aa).

An N-terminal signal peptide occupies residues 1 to 25; it reads MVMSRGRIPRLGAAVLVALTTAAAA. Cysteine 26 carries N-palmitoyl cysteine lipidation. Cysteine 26 carries the S-diacylglycerol cysteine lipid modification. A disulfide bridge links cysteine 54 with cysteine 372. Alpha,alpha-trehalose is bound by residues aspartate 97, asparagine 151, tryptophan 276, phenylalanine 278, glycine 351, and arginine 421.

Belongs to the bacterial solute-binding protein 1 family. In terms of assembly, monomer. The complex is composed of two ATP-binding proteins (SugC), two transmembrane proteins (SugA and SugB) and a solute-binding protein (LpqY).

The protein localises to the cell inner membrane. Its function is as follows. Part of the ABC transporter complex LpqY-SugA-SugB-SugC, which is highly specific for uptake of trehalose. Involved in the recycling of extracellular trehalose released from trehalose-containing molecules synthesized by M.tuberculosis. Trehalose uptake is essential for virulence. The protein is Trehalose-binding lipoprotein LpqY (lpqY) of Mycobacterium tuberculosis (strain CDC 1551 / Oshkosh).